A 604-amino-acid chain; its full sequence is Replication protein E1 (604 aa).

The Nuclear localization signal signature appears at 79 to 81 (KRK). Residues serine 84 and serine 92 each carry the phosphoserine; by host modification. Residues 144-307 (EGDIGLGTVR…TMIQHQTADT (164 aa)) form a DNA-binding region region. Positions 406–556 (LNFIMFLDKF…FPFDSDNKPL (151 aa)) constitute an SF3 helicase domain. 432 to 439 (GPPDTGKS) contributes to the ATP binding site. A Glycyl lysine isopeptide (Lys-Gly) (interchain with G-Cter in SUMO) cross-link involves residue lysine 513.

This sequence belongs to the papillomaviridae E1 protein family. As to quaternary structure, can form hexamers. Interacts with E2 protein; this interaction increases E1 DNA binding specificity. Interacts with host DNA polymerase subunit POLA2. Interacts with host single stranded DNA-binding protein RPA1. Interacts with host TOP1; this interaction stimulates the enzymatic activity of TOP1. Post-translationally, phosphorylated. In terms of processing, sumoylated.

The protein resides in the host nucleus. The catalysed reaction is Couples ATP hydrolysis with the unwinding of duplex DNA by translocating in the 3'-5' direction.. The enzyme catalyses ATP + H2O = ADP + phosphate + H(+). Its function is as follows. ATP-dependent DNA 3'-5' helicase required for initiation of viral DNA replication. It forms a complex with the viral E2 protein. The E1-E2 complex binds to the replication origin which contains binding sites for both proteins. During the initial step, a dimer of E1 interacts with a dimer of protein E2 leading to a complex that binds the viral origin of replication with high specificity. Then, a second dimer of E1 displaces the E2 dimer in an ATP-dependent manner to form the E1 tetramer. Following this, two E1 monomers are added to each half of the site, which results in the formation of two E1 trimers on the viral ori. Subsequently, two hexamers will be created. The double hexamer acts as a bi-directional helicase machinery and unwinds the viral DNA and then recruits the host DNA polymerase to start replication. The protein is Replication protein E1 of Homo sapiens (Human).